The sequence spans 109 residues: Oncomodulin (109 aa).

Ser-2 bears the N-acetylserine mark. 2 EF-hand domains span residues 39–74 (MSAS…FQSD) and 78–109 (LTES…MVHS). Ca(2+)-binding residues include Asp-52, Asp-54, Ser-56, Tyr-58, Glu-63, Asp-91, Asp-93, Asp-95, Lys-97, and Glu-102. The segment at 82 to 109 (ETKSLMDAADNDGDGKIGADEFQEMVHS) is disordered. The span at 94-109 (GDGKIGADEFQEMVHS) shows a compositional bias: basic and acidic residues.

The protein belongs to the parvalbumin family. As to expression, found in tumor tissues and not detected in normal tissues.

Functionally, has some calmodulin-like activity with respect to enzyme activation and growth regulation. Binds two calcium ions. The chain is Oncomodulin (Ocm) from Mus musculus (Mouse).